The chain runs to 71 residues: Cell division protein ZapB (71 aa).

Residues leucine 5–methionine 67 are a coiled coil.

It belongs to the ZapB family. Homodimer. The ends of the coiled-coil dimer bind to each other, forming polymers. Interacts with FtsZ.

The protein resides in the cytoplasm. Non-essential, abundant cell division factor that is required for proper Z-ring formation. It is recruited early to the divisome by direct interaction with FtsZ, stimulating Z-ring assembly and thereby promoting cell division earlier in the cell cycle. Its recruitment to the Z-ring requires functional FtsA or ZipA. In Aeromonas hydrophila subsp. hydrophila (strain ATCC 7966 / DSM 30187 / BCRC 13018 / CCUG 14551 / JCM 1027 / KCTC 2358 / NCIMB 9240 / NCTC 8049), this protein is Cell division protein ZapB.